Reading from the N-terminus, the 308-residue chain is Porphobilinogen deaminase (308 aa).

At Cys-241 the chain carries S-(dipyrrolylmethanemethyl)cysteine.

This sequence belongs to the HMBS family. Monomer. Dipyrromethane serves as cofactor.

It carries out the reaction 4 porphobilinogen + H2O = hydroxymethylbilane + 4 NH4(+). Its pathway is porphyrin-containing compound metabolism; protoporphyrin-IX biosynthesis; coproporphyrinogen-III from 5-aminolevulinate: step 2/4. Functionally, tetrapolymerization of the monopyrrole PBG into the hydroxymethylbilane pre-uroporphyrinogen in several discrete steps. This is Porphobilinogen deaminase from Exiguobacterium sibiricum (strain DSM 17290 / CCUG 55495 / CIP 109462 / JCM 13490 / 255-15).